The following is a 517-amino-acid chain: Perilipin-1 (517 aa).

A Phosphoserine modification is found at serine 81. Threonine 85 is subject to Phosphothreonine. Phosphoserine occurs at positions 126, 130, 132, 137, and 174. The segment at 195–216 (DKESAPSSGRQRTQKAPKAKPS) is disordered. Phosphothreonine occurs at positions 223, 298, and 300. Positions 286–320 (LAASQDESHDDQTDTEGEETDDEEEEEESEAEENV) are disordered. Residues 290-321 (QDESHDDQTDTEGEETDDEEEEEESEAEENVL) form a required for interaction with CIDEC region. The span at 298-318 (TDTEGEETDDEEEEEESEAEE) shows a compositional bias: acidic residues. 9 positions are modified to phosphoserine: serine 314, serine 384, serine 386, serine 410, serine 433, serine 439, serine 460, serine 492, and serine 494. Positions 425–490 (SAEAERKGSG…AMPREKPARR (66 aa)) are disordered.

This sequence belongs to the perilipin family. As to quaternary structure, interacts with ABHD5. Interacts with CIDEC. Interacts with AQP7. In terms of processing, major cAMP-dependent protein kinase-substrate in adipocytes, also dephosphorylated by PP1. When phosphorylated, may be maximally sensitive to HSL and when unphosphorylated, may play a role in the inhibition of lipolysis, by acting as a barrier in lipid droplet.

The protein resides in the endoplasmic reticulum. It is found in the lipid droplet. Functionally, modulator of adipocyte lipid metabolism. Coats lipid storage droplets to protect them from breakdown by hormone-sensitive lipase (HSL). Its absence may result in leanness. Plays a role in unilocular lipid droplet formation by activating CIDEC. Their interaction promotes lipid droplet enlargement and directional net neutral lipid transfer. May modulate lipolysis and triglyceride levels. This chain is Perilipin-1 (Plin1), found in Mus musculus (Mouse).